The sequence spans 58 residues: Cecropin-B (58 aa).

An N-terminal signal peptide occupies residues 1–21 (ILSFVFACLLALSAVSAAPEP).

It belongs to the cecropin family.

It localises to the secreted. Cecropins have lytic and antibacterial activity against several Gram-positive and Gram-negative bacteria. The sequence is that of Cecropin-B (CECB) from Spodoptera litura (Asian cotton leafworm).